Here is a 109-residue protein sequence, read N- to C-terminus: Set1 complex component sdc1 (109 aa).

Residues 49–109 are disordered; it reads QQKQKEIVNQ…SSNPGKNSAS (61 aa). A compositionally biased stretch (polar residues) spans 73-87; it reads STPTMAEQVQTSFSN. The span at 88 to 101 shows a compositional bias: low complexity; sequence PASTPLTQTSSPSS.

It belongs to the dpy-30 family. Component of the COMPASS (Set1C) complex composed of ash2, sdc1, set1, shg1, spp1, swd1, swd2 and swd3. Component of the Lid2 complex composed of ash2, jmj3, lid2, sdc1 and snt2.

It localises to the nucleus. Functionally, the COMPASS (Set1C) complex specifically mono-, di- and trimethylates histone H3 to form H3K4me1/2/3, which subsequently activates gene expression by regulating transcription elongation and plays a role in telomere length maintenance. This Schizosaccharomyces pombe (strain 972 / ATCC 24843) (Fission yeast) protein is Set1 complex component sdc1 (sdc1).